The primary structure comprises 1249 residues: Voltage-dependent calcium channel unc-36 (1249 aa).

The signal sequence occupies residues 1–19; the sequence is MRVVHLLVVLATYVSTTSS. Over 20–1228 the chain is Extracellular; sequence FNKESIKECA…SENERRPCST (1209 aa). N-linked (GlcNAc...) asparagine glycans are attached at residues N100, N140, N146, N302, N520, N558, N757, N838, N903, N923, and N1130. The region spanning 250-479 is the VWFA domain; the sequence is NVLIMLDMSG…EKIHHYIRRM (230 aa). Residues 1229–1248 form a helical membrane-spanning segment; that stretch reads SPTIVSIFQILFGVFLHFCI. A topological domain (cytoplasmic) is located at residue F1249.

Decendants of the cells AB and AB.p (that give rise to nearly all non-pharyngeal neurons), decendants of P1 (that give rise to body muscle) and cell lineages that give rise to the adult and juvenile motor neurons. Expressed in body wall, vulval muscle and pharyngeal muscle.

Its subcellular location is the membrane. May act as an auxiliary subunit of the unc-2 voltage-gated calcium channel which appears to trigger calcium-activated signaling pathways that control the serotonin response. Inhibiting serotonin sensitivity of the vulval muscles results in egg laying defects. May act in both neurons and muscle cells to enhance motor activity as it is required for coordinated movement. Has a role in neural depolarization-induced calcium influx and pharyngeal pumping. Involved in restricting the expression of the putative olfactory receptor str-2 to only one of the two AWC neurons. This Caenorhabditis elegans protein is Voltage-dependent calcium channel unc-36 (unc-36).